Consider the following 749-residue polypeptide: 1,4-alpha-glucan branching enzyme GlgB (749 aa).

Asp415 functions as the Nucleophile in the catalytic mechanism. The active-site Proton donor is the Glu468.

Belongs to the glycosyl hydrolase 13 family. GlgB subfamily. As to quaternary structure, monomer.

It carries out the reaction Transfers a segment of a (1-&gt;4)-alpha-D-glucan chain to a primary hydroxy group in a similar glucan chain.. The protein operates within glycan biosynthesis; glycogen biosynthesis. Its function is as follows. Catalyzes the formation of the alpha-1,6-glucosidic linkages in glycogen by scission of a 1,4-alpha-linked oligosaccharide from growing alpha-1,4-glucan chains and the subsequent attachment of the oligosaccharide to the alpha-1,6 position. The protein is 1,4-alpha-glucan branching enzyme GlgB of Nitrosococcus oceani (strain ATCC 19707 / BCRC 17464 / JCM 30415 / NCIMB 11848 / C-107).